The following is a 202-amino-acid chain: MEGTVFTPCLEGMKHVKSDQGEMLTKPFLELCKTILPVIDKFGAAMTLVKSDIGGNITRLEKNYLSDPDKFKYLYTFVQVEIESKIAKGSSSCTNGLLWLTRAMDFLVELFRNLVAHQDWSMPQACADSYQKTLKKWHGWLASSTFSMALKLAPDRKKFMDVISGSGNIQADMERFCAEFGPFLHDNHKFLASVGMDDMKAS.

Residues Asp-52, Asn-56, Trp-99, and His-138 each coordinate a ganglioside GM3 (d18:1(4E)).

Belongs to the GLTP family.

In terms of biological role, may be involved in glycolipids transfer. This is Glycolipid transfer protein 1 from Arabidopsis thaliana (Mouse-ear cress).